Consider the following 207-residue polypeptide: Probable GTP-binding protein EngB (207 aa).

The region spanning 25–202 is the EngB-type G domain; sequence DVPEIAFVGR…ATLLWQWAHP (178 aa). Residues 33 to 40, 60 to 64, 82 to 85, 152 to 155, and 181 to 183 contribute to the GTP site; these read GRSNAGKS, GRTQH, DLPG, TKAD, and FSA. Residues S40 and T62 each coordinate Mg(2+).

The protein belongs to the TRAFAC class TrmE-Era-EngA-EngB-Septin-like GTPase superfamily. EngB GTPase family. It depends on Mg(2+) as a cofactor.

Its function is as follows. Necessary for normal cell division and for the maintenance of normal septation. The protein is Probable GTP-binding protein EngB of Albidiferax ferrireducens (strain ATCC BAA-621 / DSM 15236 / T118) (Rhodoferax ferrireducens).